The primary structure comprises 234 residues: 2-C-methyl-D-erythritol 4-phosphate cytidylyltransferase (234 aa).

This sequence belongs to the IspD/TarI cytidylyltransferase family. IspD subfamily.

It catalyses the reaction 2-C-methyl-D-erythritol 4-phosphate + CTP + H(+) = 4-CDP-2-C-methyl-D-erythritol + diphosphate. Its pathway is isoprenoid biosynthesis; isopentenyl diphosphate biosynthesis via DXP pathway; isopentenyl diphosphate from 1-deoxy-D-xylulose 5-phosphate: step 2/6. Catalyzes the formation of 4-diphosphocytidyl-2-C-methyl-D-erythritol from CTP and 2-C-methyl-D-erythritol 4-phosphate (MEP). This chain is 2-C-methyl-D-erythritol 4-phosphate cytidylyltransferase, found in Desulforamulus reducens (strain ATCC BAA-1160 / DSM 100696 / MI-1) (Desulfotomaculum reducens).